We begin with the raw amino-acid sequence, 88 residues long: Sec-independent protein translocase protein TatA (88 aa).

Residues 1–21 (MNLGPTEILLILVIVVLLFGA) traverse the membrane as a helical segment. Over residues 46-56 (SNDDQRYEEQQ) the composition is skewed to basic and acidic residues. Residues 46–88 (SNDDQRYEEQQQQRQIAAQAQQQVVNPVEIPQPQPTDIQRPQQ) form a disordered region. Residues 57–68 (QQRQIAAQAQQQ) are compositionally biased toward low complexity.

Belongs to the TatA/E family. In terms of assembly, the Tat system comprises two distinct complexes: a TatABC complex, containing multiple copies of TatA, TatB and TatC subunits, and a separate TatA complex, containing only TatA subunits. Substrates initially bind to the TatABC complex, which probably triggers association of the separate TatA complex to form the active translocon.

It localises to the cell membrane. Part of the twin-arginine translocation (Tat) system that transports large folded proteins containing a characteristic twin-arginine motif in their signal peptide across membranes. TatA could form the protein-conducting channel of the Tat system. This Corynebacterium diphtheriae (strain ATCC 700971 / NCTC 13129 / Biotype gravis) protein is Sec-independent protein translocase protein TatA.